Reading from the N-terminus, the 396-residue chain is Elongation factor Tu (396 aa).

In terms of domain architecture, tr-type G spans 10 to 206; the sequence is KPHINVGTIG…QMDAYIPEPQ (197 aa). Positions 19 to 26 are G1; sequence GHVDHGKT. 19-26 is a binding site for GTP; that stretch reads GHVDHGKT. A Mg(2+)-binding site is contributed by threonine 26. Residues 60 to 64 form a G2 region; sequence GITIA. Positions 81-84 are G3; that stretch reads DCPG. Residues 81–85 and 136–139 each bind GTP; these read DCPGH and NKAD. The segment at 136-139 is G4; sequence NKAD. The G5 stretch occupies residues 174–176; that stretch reads SAL.

Belongs to the TRAFAC class translation factor GTPase superfamily. Classic translation factor GTPase family. EF-Tu/EF-1A subfamily. As to quaternary structure, monomer.

It localises to the cytoplasm. The enzyme catalyses GTP + H2O = GDP + phosphate + H(+). GTP hydrolase that promotes the GTP-dependent binding of aminoacyl-tRNA to the A-site of ribosomes during protein biosynthesis. This chain is Elongation factor Tu, found in Nitrosococcus oceani (strain ATCC 19707 / BCRC 17464 / JCM 30415 / NCIMB 11848 / C-107).